A 274-amino-acid polypeptide reads, in one-letter code: Nickel/cobalt efflux system RcnA (274 aa).

At 1-12 (MTEFTTLLQQGN) the chain is on the periplasmic side. A helical membrane pass occupies residues 13 to 33 (AWFFIPSAILLGALHGLEPGH). At 34 to 56 (SKTMMAAFIIAIKGTIKQAVMLG) the chain is on the cytoplasmic side. Residues 57-77 (LAATISHTAVVWLIAFGGMVI) traverse the membrane as a helical segment. The Periplasmic segment spans residues 78–86 (SKRFTAQSA). Residues 87–107 (EPWLQLISAVIIISTAFWMFW) traverse the membrane as a helical segment. Residues 108 to 175 (RTWRGERNWL…DGREVTNWQI (68 aa)) are Cytoplasmic-facing. Residues 127–153 (HHHHDHEHHHDHGHHHHHEHGEYQDAH) form a disordered region. Basic residues predominate over residues 129–144 (HHDHEHHHDHGHHHHH). The helical transmembrane segment at 176-196 (LLFGLTGGLIPCPAAITVLLI) threads the bilayer. At 197 to 209 (CIQLKALTLGATL) the chain is on the periplasmic side. The chain crosses the membrane as a helical span at residues 210-230 (VVSFSIGLALTLVTVGVGAAI). The Cytoplasmic segment spans residues 231–251 (SVQQVAKRWSGFNTLAKRAPY). The helical transmembrane segment at 252–272 (FSSLLIGLVGVYMGVHGFMGI) threads the bilayer. At 273-274 (MR) the chain is on the periplasmic side.

Belongs to the NiCoT transporter (TC 2.A.52) family. RcnA subfamily.

It is found in the cell inner membrane. Functionally, efflux system for nickel and cobalt. This Escherichia coli (strain K12) protein is Nickel/cobalt efflux system RcnA (rcnA).